A 309-amino-acid polypeptide reads, in one-letter code: Probable manganese-dependent inorganic pyrophosphatase (309 aa).

Residues histidine 9, aspartate 13, aspartate 15, aspartate 75, histidine 97, and aspartate 149 each contribute to the Mn(2+) site.

The protein belongs to the PPase class C family. The cofactor is Mn(2+).

It localises to the cytoplasm. It carries out the reaction diphosphate + H2O = 2 phosphate + H(+). This chain is Probable manganese-dependent inorganic pyrophosphatase, found in Staphylococcus epidermidis (strain ATCC 12228 / FDA PCI 1200).